We begin with the raw amino-acid sequence, 197 residues long: Holliday junction branch migration complex subunit RuvA (197 aa).

Residues 1 to 64 (MIASIRGILI…EDSLTLYGFE (64 aa)) are domain I. A domain II region spans residues 65-145 (TVEQRQLFET…GLPTGAAVTP (81 aa)). Residues 146 to 148 (AVA) are flexible linker. The tract at residues 148–197 (AAANAELSEALISLGFTDAEAAAAIAALPSDAPPDLEERVRLALRYFSAS) is domain III.

The protein belongs to the RuvA family. As to quaternary structure, homotetramer. Forms an RuvA(8)-RuvB(12)-Holliday junction (HJ) complex. HJ DNA is sandwiched between 2 RuvA tetramers; dsDNA enters through RuvA and exits via RuvB. An RuvB hexamer assembles on each DNA strand where it exits the tetramer. Each RuvB hexamer is contacted by two RuvA subunits (via domain III) on 2 adjacent RuvB subunits; this complex drives branch migration. In the full resolvosome a probable DNA-RuvA(4)-RuvB(12)-RuvC(2) complex forms which resolves the HJ.

Its subcellular location is the cytoplasm. The RuvA-RuvB-RuvC complex processes Holliday junction (HJ) DNA during genetic recombination and DNA repair, while the RuvA-RuvB complex plays an important role in the rescue of blocked DNA replication forks via replication fork reversal (RFR). RuvA specifically binds to HJ cruciform DNA, conferring on it an open structure. The RuvB hexamer acts as an ATP-dependent pump, pulling dsDNA into and through the RuvAB complex. HJ branch migration allows RuvC to scan DNA until it finds its consensus sequence, where it cleaves and resolves the cruciform DNA. This is Holliday junction branch migration complex subunit RuvA from Roseiflexus sp. (strain RS-1).